The primary structure comprises 382 residues: Alanine racemase 1 (382 aa).

Lys-39 functions as the Proton acceptor; specific for D-alanine in the catalytic mechanism. N6-(pyridoxal phosphate)lysine is present on Lys-39. Arg-138 contributes to the substrate binding site. Tyr-265 serves as the catalytic Proton acceptor; specific for L-alanine. Position 312 (Met-312) interacts with substrate.

This sequence belongs to the alanine racemase family. Pyridoxal 5'-phosphate is required as a cofactor.

It carries out the reaction L-alanine = D-alanine. The protein operates within amino-acid biosynthesis; D-alanine biosynthesis; D-alanine from L-alanine: step 1/1. Functionally, catalyzes the interconversion of L-alanine and D-alanine. May also act on other amino acids. The polypeptide is Alanine racemase 1 (alr1) (Staphylococcus aureus (strain MRSA252)).